A 200-amino-acid polypeptide reads, in one-letter code: Translation machinery-associated protein 22 (200 aa).

The SUI1 domain maps to 95-166 (VVIRREARTK…EVEAYIHSLL (72 aa)).

This sequence belongs to the DENR family. In terms of assembly, interacts with the 40S ribosomal subunit.

It localises to the cytoplasm. The protein is Translation machinery-associated protein 22 (TMA22) of Kluyveromyces lactis (strain ATCC 8585 / CBS 2359 / DSM 70799 / NBRC 1267 / NRRL Y-1140 / WM37) (Yeast).